The primary structure comprises 493 residues: GPI alpha-1,6-mannosyltransferase 2 (493 aa).

The Cytoplasmic segment spans residues M1–R13. Residues F14–P34 traverse the membrane as a helical segment. Residues D35 to H77 lie on the Lumenal side of the membrane. Residues G78–G98 form a helical membrane-spanning segment. The Cytoplasmic portion of the chain corresponds to T99–S113. The helical transmembrane segment at C114–L134 threads the bilayer. The Lumenal portion of the chain corresponds to H135–D136. A helical transmembrane segment spans residues L137 to I157. The Cytoplasmic portion of the chain corresponds to S158–N161. The chain crosses the membrane as a helical span at residues V162 to G182. At Q183–S192 the chain is on the lumenal side. The helical transmembrane segment at G193–L213 threads the bilayer. The Cytoplasmic segment spans residues L214 to L234. The helical transmembrane segment at V235 to F255 threads the bilayer. The Lumenal segment spans residues Q256–N327. Residues F328–T348 form a helical membrane-spanning segment. The Cytoplasmic segment spans residues H349–K378. Residues V379–V399 form a helical membrane-spanning segment. Residues Q400–R469 lie on the Lumenal side of the membrane. A helical transmembrane segment spans residues C470 to L490. Residues P491–T493 are Cytoplasmic-facing.

Belongs to the PIGV family. Not N-glycosylated.

It localises to the endoplasmic reticulum membrane. It participates in glycolipid biosynthesis; glycosylphosphatidylinositol-anchor biosynthesis. In terms of biological role, alpha-1,6-mannosyltransferase that catalyzes the transfer of the second mannose, via an alpha-1,6 bond, from a dolichol-phosphate-mannose (Dol-P-Man) to the alpha-D-Man-(1-&gt;4)-alpha-D-GlcN-(1-&gt;6)-(1-radyl,2-acyl-sn-glycero-3-phospho)-2-acyl-inositol (also termed H2) intermediate to generate an alpha-D-Man-(1-&gt;6)-alpha-D-Man-(1-&gt;4)-alpha-D-GlcN-(1-&gt;6)-(1-radyl,2-acyl-sn-glycero-3-phospho)-2-acyl-inositol (also termed H3) and participates in the seventh step of the glycosylphosphatidylinositol-anchor biosynthesis. Also transfers the second mannose on a 2-PEtn-alpha-D-Man-(1-&gt;4)-alpha-D-GlcN-(1-&gt;6)-(1-radyl,2-acyl-sn-glycero-3-phospho)-2-acyl-inositol (also termed H5). The protein is GPI alpha-1,6-mannosyltransferase 2 of Mus musculus (Mouse).